The chain runs to 324 residues: MYG1 protein C694.04c (324 aa).

It belongs to the MYG1 family.

The polypeptide is MYG1 protein C694.04c (Schizosaccharomyces pombe (strain 972 / ATCC 24843) (Fission yeast)).